The primary structure comprises 333 residues: MSNEVINVLITGAAGQIAYSLIFNVCKGDMFGLDQRIKLHLLDIPQMVDSLKGIVMEIQDGAYPLIADTVITADVKEAFTGVHYAILVGAMPRREGMERADLLKANAAIFKVQGKALAEHANKNVKVLVVGNPANTNALIAQVSANGIPKENFTCLTRLDQNRAKSQIALKAGVNVKDVHNVIIWGNHSSTQYPDYRCGYINLSTGKTPISTAIKDEKWLQGEFISTVQKRGAAVIAARKLSSAASAAKAITDHMHDWVLGTAEGEYVSMGVYSDGSYGVPEGLIFSFPVKCANGKYTIVQGLQMDDLSKNLINLTTEELVAEKTTALQFLSE.

NAD(+) is bound at residue 12-18 (GAAGQIA). Substrate-binding residues include Arg93 and Arg99. Residues Asn106, Gln113, and 130-132 (VGN) each bind NAD(+). Residues Asn132 and Arg163 each coordinate substrate. His188 (proton acceptor) is an active-site residue.

It belongs to the LDH/MDH superfamily. MDH type 2 family. As to quaternary structure, homodimer.

It carries out the reaction (S)-malate + NAD(+) = oxaloacetate + NADH + H(+). Its function is as follows. Catalyzes the reversible oxidation of malate to oxaloacetate. This chain is Probable malate dehydrogenase 3 (mdhC), found in Dictyostelium discoideum (Social amoeba).